The sequence spans 180 residues: Centromere protein M (180 aa).

The protein resides in the nucleus. The protein localises to the chromosome. Its subcellular location is the centromere. In terms of biological role, probable component of a centromeric complex involved in assembly of kinetochore proteins, mitotic progression and chromosome segregation. The polypeptide is Centromere protein M (cenpm) (Xenopus laevis (African clawed frog)).